Reading from the N-terminus, the 322-residue chain is Cysteine protease YopT (322 aa).

Residues C139, H258, and D274 contribute to the active site.

The protein belongs to the peptidase C58 family. In terms of assembly, interacts with human ARHA.

The protein localises to the secreted. In terms of biological role, cysteine protease, which is translocated into infected cells and plays a central role in pathogenesis by cleaving the C-terminus end of the human small GTPase RhoA/ARHA, a regulator of cytoskeleton. Once cleaved, ARHA loses its lipid modification, and is released from the cell membrane, leading to the subsequent disruption of actin cytoskeleton of the host cell. This is Cysteine protease YopT (yopT) from Yersinia pestis.